A 251-amino-acid chain; its full sequence is 4-hydroxy-tetrahydrodipicolinate reductase (251 aa).

Residues 8–13, 76–78, and 106–109 each bind NAD(+); these read GAKGRM, GTT, and APNF. The active-site Proton donor/acceptor is the His-136. Residue His-137 coordinates (S)-2,3,4,5-tetrahydrodipicolinate. Catalysis depends on Lys-140, which acts as the Proton donor. 146 to 147 serves as a coordination point for (S)-2,3,4,5-tetrahydrodipicolinate; sequence GT.

The protein belongs to the DapB family.

The protein resides in the cytoplasm. The catalysed reaction is (S)-2,3,4,5-tetrahydrodipicolinate + NAD(+) + H2O = (2S,4S)-4-hydroxy-2,3,4,5-tetrahydrodipicolinate + NADH + H(+). The enzyme catalyses (S)-2,3,4,5-tetrahydrodipicolinate + NADP(+) + H2O = (2S,4S)-4-hydroxy-2,3,4,5-tetrahydrodipicolinate + NADPH + H(+). It participates in amino-acid biosynthesis; L-lysine biosynthesis via DAP pathway; (S)-tetrahydrodipicolinate from L-aspartate: step 4/4. Its function is as follows. Catalyzes the conversion of 4-hydroxy-tetrahydrodipicolinate (HTPA) to tetrahydrodipicolinate. The sequence is that of 4-hydroxy-tetrahydrodipicolinate reductase from Bifidobacterium longum (strain NCC 2705).